Reading from the N-terminus, the 300-residue chain is Probable phytol kinase, chloroplastic (300 aa).

Residues 1-36 (MAAARPALPSSPTSLLLARSTSAPDLAARRPRRWLV) constitute a chloroplast transit peptide. Transmembrane regions (helical) follow at residues 60–78 (LLRDGGATLLVTAGAYSLV), 98–118 (VVHVLSGVFFMASWPLFSNST), 122–142 (FFAAVVPFLNCVRLLTYGLGF), 168–188 (YVIVLLIIVLVFWRDSPIGIV), 227–247 (FISGFLLSALMLSYFSWLGYI), 254–274 (ALGKLVLVALAATVVECIPVT), and 276–296 (VVDDNISVPLATMLVAFLLFG).

This sequence belongs to the polyprenol kinase family.

Its subcellular location is the plastid. It localises to the chloroplast membrane. The catalysed reaction is phytol + CTP = phytyl phosphate + CDP + H(+). The protein operates within cofactor biosynthesis; tocopherol biosynthesis. In terms of biological role, involved in the activation and reutilization of phytol from chlorophyll degradation in plant metabolism, including tocopherol biosynthesis. Catalyzes the conversion of phytol to phytol monophosphate (PMP). In Triticum aestivum (Wheat), this protein is Probable phytol kinase, chloroplastic.